The primary structure comprises 34 residues: Antimicrobial peptide Alo-1 (34 aa).

3 cysteine pairs are disulfide-bonded: Cys-1–Cys-18, Cys-8–Cys-22, and Cys-17–Cys-33.

It localises to the secreted. Functionally, has antifungal activity against C.glabrata. The polypeptide is Antimicrobial peptide Alo-1 (Acrocinus longimanus (Giant harlequin beetle)).